A 486-amino-acid polypeptide reads, in one-letter code: Dipeptide and tripeptide permease B (486 aa).

At 1 to 27 (MNKPVSIGLLQQPKPFFMIFFVELWER) the chain is on the cytoplasmic side. A helical transmembrane segment spans residues 28-48 (FGYYGVQGVLTVYFVQKLGFS). Residues 49–52 (QEQA) lie on the Periplasmic side of the membrane. A helical transmembrane segment spans residues 53 to 73 (FITFGAFAALVFGLISIGGYV). Residues 74-82 (GDHLLGTKR) lie on the Cytoplasmic side of the membrane. A helical membrane pass occupies residues 83–103 (TIVLGAIVLAIGYFMTGLSIL). The Periplasmic segment spans residues 104–106 (HPN). Residues 107–127 (LIFYALGTIAVGNGLFKANPA) form a helical membrane-spanning segment. Residues 128–146 (SLLSKCYPPKDPRLDGAFT) lie on the Cytoplasmic side of the membrane. The helical transmembrane segment at 147 to 167 (LFYMSINLGSLFSLALAPVIA) threads the bilayer. At 168-172 (EKFSY) the chain is on the periplasmic side. Residues 173–193 (AVTYNICGIGLIIALLVYIFC) form a helical membrane-spanning segment. Over 194–211 (RNTVRNIGSEPDHQRINY) the chain is Cytoplasmic. The helical transmembrane segment at 212 to 232 (TNLFLVVAGSVVMVYVCAWLM) threads the bilayer. Position 233 (H233) is a topological domain, periplasmic. A helical membrane pass occupies residues 234–254 (NVKIANIMLITLSVIVVFIFF). Residues 255 to 267 (REALKQDKIGRNK) lie on the Cytoplasmic side of the membrane. A helical transmembrane segment spans residues 268–288 (MFVAFILMLQAIVFFILYAQM). Over 289 to 311 (PTSLNFFAIHNVHHQLLGFNINP) the chain is Periplasmic. Residues 312 to 332 (VSFQALNPFWIVVASPILAVL) traverse the membrane as a helical segment. Residues 333 to 348 (YTHWGAKGKDLTMPAK) lie on the Cytoplasmic side of the membrane. A helical transmembrane segment spans residues 349–369 (FAVGMFLCSLGFLTAAAAGLW). At 370–375 (FADEQG) the chain is on the periplasmic side. Residues 376 to 396 (LTSAWFIVLVYLFQGVGELMI) form a helical membrane-spanning segment. At 397–419 (SALGLAMIAALVPQYLMGFILGM) the chain is on the cytoplasmic side. A helical transmembrane segment spans residues 420–440 (WYLTQATSSLLGGYVAALTAA). Residues 441 to 456 (PKGITDPLQTLPVYTS) lie on the Periplasmic side of the membrane. A helical membrane pass occupies residues 457–477 (VFGKIGIATFIVAIIMAATVP). At 478–486 (LLNRMMQEK) the chain is on the cytoplasmic side.

Belongs to the major facilitator superfamily. Proton-dependent oligopeptide transporter (POT/PTR) (TC 2.A.17) family. DtpB subfamily.

The protein resides in the cell inner membrane. Its function is as follows. Proton-dependent permease that transports di- and tripeptides. This Photorhabdus luminescens (Xenorhabdus luminescens) protein is Dipeptide and tripeptide permease B.